The chain runs to 458 residues: tRNA-2-methylthio-N(6)-dimethylallyladenosine synthase (458 aa).

The MTTase N-terminal domain occupies Lys15 to Gln134. Cys24, Cys60, Cys97, Cys175, Cys179, and Cys182 together coordinate [4Fe-4S] cluster. A Radical SAM core domain is found at Arg161–Ala393. The TRAM domain occupies Arg396–Asn457.

It belongs to the methylthiotransferase family. MiaB subfamily. As to quaternary structure, monomer. [4Fe-4S] cluster serves as cofactor.

The protein localises to the cytoplasm. It catalyses the reaction N(6)-dimethylallyladenosine(37) in tRNA + (sulfur carrier)-SH + AH2 + 2 S-adenosyl-L-methionine = 2-methylsulfanyl-N(6)-dimethylallyladenosine(37) in tRNA + (sulfur carrier)-H + 5'-deoxyadenosine + L-methionine + A + S-adenosyl-L-homocysteine + 2 H(+). Its function is as follows. Catalyzes the methylthiolation of N6-(dimethylallyl)adenosine (i(6)A), leading to the formation of 2-methylthio-N6-(dimethylallyl)adenosine (ms(2)i(6)A) at position 37 in tRNAs that read codons beginning with uridine. This chain is tRNA-2-methylthio-N(6)-dimethylallyladenosine synthase, found in Bartonella henselae (strain ATCC 49882 / DSM 28221 / CCUG 30454 / Houston 1) (Rochalimaea henselae).